The primary structure comprises 431 residues: Glutamate-1-semialdehyde 2,1-aminomutase (431 aa).

The residue at position 264 (lysine 264) is an N6-(pyridoxal phosphate)lysine.

Belongs to the class-III pyridoxal-phosphate-dependent aminotransferase family. HemL subfamily. As to quaternary structure, homodimer. Requires pyridoxal 5'-phosphate as cofactor.

It is found in the cytoplasm. The enzyme catalyses (S)-4-amino-5-oxopentanoate = 5-aminolevulinate. The protein operates within porphyrin-containing compound metabolism; protoporphyrin-IX biosynthesis; 5-aminolevulinate from L-glutamyl-tRNA(Glu): step 2/2. The sequence is that of Glutamate-1-semialdehyde 2,1-aminomutase from Clostridium beijerinckii (strain ATCC 51743 / NCIMB 8052) (Clostridium acetobutylicum).